The following is a 115-amino-acid chain: Large ribosomal subunit protein bL19 (115 aa).

This sequence belongs to the bacterial ribosomal protein bL19 family.

This protein is located at the 30S-50S ribosomal subunit interface and may play a role in the structure and function of the aminoacyl-tRNA binding site. The protein is Large ribosomal subunit protein bL19 of Escherichia coli O139:H28 (strain E24377A / ETEC).